A 372-amino-acid polypeptide reads, in one-letter code: MSMLGNIKTYAQTVTSLSDNDDTSIDRLNYVVTTSILIAFSLLLFAKNYVGEPMQCWTPNQFAGGWESFAESYCFIENTYFVPMQDSNLPAAETREGREMIYYQWVPFLLVIQALFFCVPRAFWIIYPSYSGLTIADMITAARQNGKQLEGADEALEQVAMINWRTEQQKGHGSRIFNCYLVMKLLILLNIVLQFFLLNSFLNTAYTFWGWGIFWDMVNGRHWQESGHFPRVSFCDINVRELGNIHHWSLQCVLMVNMFNEKIFIFLWFWFAFLLVATAGDFVIWVWRRFDSNSKLGFILDLLNQEGIDHSPQKASELYKNVLRDDGVLFLRLLDSNSGRLNSEELMKKIYNISVGHATDLNTPIEEHATSE.

Helical transmembrane passes span 31 to 51 (VVTT…NYVG), 106 to 126 (VPFL…FWII), 181 to 201 (LVMK…LNSF), and 263 to 283 (IFIF…GDFV). The N-linked (GlcNAc...) asparagine glycan is linked to Asn-352.

This sequence belongs to the pannexin family.

It is found in the cell membrane. It localises to the cell junction. Its subcellular location is the gap junction. In terms of biological role, structural component of the gap junctions. Required for signals downstream of defecation clock. The sequence is that of Innexin-16 (inx-16) from Caenorhabditis elegans.